Here is a 710-residue protein sequence, read N- to C-terminus: Polyribonucleotide nucleotidyltransferase (710 aa).

Mg(2+) is bound by residues Asp501 and Asp507. The KH domain maps to 568–628 (PKVQMFQIKP…ETVKQAILFI (61 aa)). The S1 motif domain occupies 638–710 (NSIYHAHISR…RIDFVLISKK (73 aa)).

The protein belongs to the polyribonucleotide nucleotidyltransferase family. Mg(2+) is required as a cofactor.

It is found in the cytoplasm. The enzyme catalyses RNA(n+1) + phosphate = RNA(n) + a ribonucleoside 5'-diphosphate. In terms of biological role, involved in mRNA degradation. Catalyzes the phosphorolysis of single-stranded polyribonucleotides processively in the 3'- to 5'-direction. The chain is Polyribonucleotide nucleotidyltransferase from Phytoplasma australiense.